A 477-amino-acid polypeptide reads, in one-letter code: MEWDTVIGLEVHAQLKTKSKLFSGASTAFGATPNSQTSFIDAGLPGVLPVLNEQAIIMAIQFGLAIHGTINDLSVFERKNYFYSDLPKGYQISQYQKPIVTNGYLNIQLGNNLEKTVHIARAHLEEDAGKSLHDAHTDYTGIDLNRAGTPLLEIVTTPCLHSAEEAINYLKTLHQLVRFLGICDGNMQEGSFRCDVNLSIKPKGSSVLGTRTELKNLNSFRFIEKAIAFEQARHQDILESGLSVIQETRLYNPDNNTTQAMRGKENENDYRYFPDPDLLPIHIDKEQIEAIKNNLPDLPEAISKELKNTPSLNDEDINFILSSPDTYQYYKKIKSLCPAADKTIINWLKGQYAAFLNEHNLTFETPPISAKTMAAFLSKIHEKKISSSIAKNIFSMLCTGEKDIDAIIEREGYQQQNDNSALEEIVEQIIKQYPEQVTEYKAGKEKLLAFFIGQAMKQTKGKANPEQINLLLKKHLG.

Belongs to the GatB/GatE family. GatB subfamily. As to quaternary structure, heterotrimer of A, B and C subunits.

The catalysed reaction is L-glutamyl-tRNA(Gln) + L-glutamine + ATP + H2O = L-glutaminyl-tRNA(Gln) + L-glutamate + ADP + phosphate + H(+). It catalyses the reaction L-aspartyl-tRNA(Asn) + L-glutamine + ATP + H2O = L-asparaginyl-tRNA(Asn) + L-glutamate + ADP + phosphate + 2 H(+). Its function is as follows. Allows the formation of correctly charged Asn-tRNA(Asn) or Gln-tRNA(Gln) through the transamidation of misacylated Asp-tRNA(Asn) or Glu-tRNA(Gln) in organisms which lack either or both of asparaginyl-tRNA or glutaminyl-tRNA synthetases. The reaction takes place in the presence of glutamine and ATP through an activated phospho-Asp-tRNA(Asn) or phospho-Glu-tRNA(Gln). This chain is Aspartyl/glutamyl-tRNA(Asn/Gln) amidotransferase subunit B, found in Legionella pneumophila (strain Corby).